A 641-amino-acid chain; its full sequence is 1-phosphatidylinositol 4,5-bisphosphate phosphodiesterase zeta-1 (641 aa).

Residues Cys-35–Arg-70 form the EF-hand domain. The PI-PLC X-box domain maps to Gln-155–Lys-299. Catalysis depends on residues His-170 and His-215. Residues Leu-382–Arg-498 form the PI-PLC Y-box domain. Residues Arg-498–Ser-622 form the C2 domain.

Interacts via its C2 domain with PtdIns(3)P and, to a lesser extent, PtdIns(5)P in vitro. Ca(2+) is required as a cofactor.

Its subcellular location is the nucleus. The protein localises to the cytoplasm. It is found in the perinuclear region. The catalysed reaction is a 1,2-diacyl-sn-glycero-3-phospho-(1D-myo-inositol-4,5-bisphosphate) + H2O = 1D-myo-inositol 1,4,5-trisphosphate + a 1,2-diacyl-sn-glycerol + H(+). In terms of biological role, the production of the second messenger molecules diacylglycerol (DAG) and inositol 1,4,5-trisphosphate (IP3) is mediated by activated phosphatidylinositol-specific phospholipase C enzymes. In vitro, hydrolyzes PtdIns(4,5)P2 in a Ca(2+)-dependent manner. Triggers intracellular Ca(2+) oscillations in oocytes solely during M phase and is involved in inducing oocyte activation and initiating embryonic development up to the blastocyst stage. Is therefore a strong candidate for the egg-activating soluble sperm factor that is transferred from the sperm into the egg cytoplasm following gamete membrane fusion. May exert an inhibitory effect on phospholipase-C-coupled processes that depend on calcium ions and protein kinase C, including CFTR trafficking and function. This is 1-phosphatidylinositol 4,5-bisphosphate phosphodiesterase zeta-1 from Macaca fascicularis (Crab-eating macaque).